We begin with the raw amino-acid sequence, 463 residues long: Probable Xaa-Pro aminopeptidase pepP (463 aa).

Positions 259, 270, 393, and 433 each coordinate Mn(2+).

It belongs to the peptidase M24B family. Mn(2+) is required as a cofactor.

The enzyme catalyses Release of any N-terminal amino acid, including proline, that is linked to proline, even from a dipeptide or tripeptide.. Catalyzes the removal of a penultimate prolyl residue from the N-termini of peptides. In Pyrenophora teres f. teres (strain 0-1) (Barley net blotch fungus), this protein is Probable Xaa-Pro aminopeptidase pepP (pepP).